Here is a 500-residue protein sequence, read N- to C-terminus: Cytochrome P450 71B37 (500 aa).

A helical membrane pass occupies residues 2 to 22 (ATIWFLPLLFLSCLLLAALRL). Cys-440 serves as a coordination point for heme.

This sequence belongs to the cytochrome P450 family. Heme serves as cofactor.

The protein resides in the membrane. The polypeptide is Cytochrome P450 71B37 (CYP71B37) (Arabidopsis thaliana (Mouse-ear cress)).